A 405-amino-acid polypeptide reads, in one-letter code: MNLALNLLYKRGFLKQCTSLKVLSDLMDREKIVFYAGVDTTSSSLHIGHLIPFLAMMHLRQHGHMPIVLIGDSTTKIGDPSGKSEMRKILSSEVINNNALSIKNQLQKITRFSSSCFIHNSNWLDNLNYIEFLRDIGIHFSVNRMLSFETYKRRLDFGLSFIEFNYQLLQSYDYYMLNKIKNCKLQIGGDDQWGNIVSGVDLIRRKMGVEAFGLTFPLITRSDGKKMGKSEKGAVYLDSSLYSIYDFYQYFRNTSDSDVKTFLYLFTFLEEDEIESISNFKGNSLNKAKEILAFEITKIVHGEVEALKVQEASFAAFRGSGDRSNIPFFKFSFSGLEEEILLIDLMLDSKIVPSKSEGRRLINSGGVYINGKRVENQNHCITREDFNNNEIELRVGKKKFLRIVL.

Tyr-35 contributes to the L-tyrosine binding site. Residues 40–49 (TTSSSLHIGH) carry the 'HIGH' region motif. L-tyrosine is bound by residues Tyr-166 and Gln-170. The 'KMSKS' region motif lies at 226–230 (KMGKS). ATP is bound at residue Lys-229. The 65-residue stretch at 340–404 (ILLIDLMLDS…VGKKKFLRIV (65 aa)) folds into the S4 RNA-binding domain.

It belongs to the class-I aminoacyl-tRNA synthetase family. TyrS type 1 subfamily. In terms of assembly, homodimer.

Its subcellular location is the cytoplasm. The enzyme catalyses tRNA(Tyr) + L-tyrosine + ATP = L-tyrosyl-tRNA(Tyr) + AMP + diphosphate + H(+). Catalyzes the attachment of tyrosine to tRNA(Tyr) in a two-step reaction: tyrosine is first activated by ATP to form Tyr-AMP and then transferred to the acceptor end of tRNA(Tyr). This chain is Tyrosine--tRNA ligase, found in Borrelia garinii subsp. bavariensis (strain ATCC BAA-2496 / DSM 23469 / PBi) (Borreliella bavariensis).